The primary structure comprises 157 residues: Transcription elongation factor GreA (157 aa).

The interval 1 to 60 (MEKVPMTSAGFAALGEELKKRQSEDRPRIIEHIAEARSHGDLSENAEYHAAKEEQSHNEG) is disordered. Basic and acidic residues predominate over residues 16–60 (EELKKRQSEDRPRIIEHIAEARSHGDLSENAEYHAAKEEQSHNEG). Residues 46–73 (AEYHAAKEEQSHNEGRIAELEDKLARAD) are a coiled coil.

This sequence belongs to the GreA/GreB family.

In terms of biological role, necessary for efficient RNA polymerase transcription elongation past template-encoded arresting sites. The arresting sites in DNA have the property of trapping a certain fraction of elongating RNA polymerases that pass through, resulting in locked ternary complexes. Cleavage of the nascent transcript by cleavage factors such as GreA or GreB allows the resumption of elongation from the new 3'terminus. GreA releases sequences of 2 to 3 nucleotides. The polypeptide is Transcription elongation factor GreA (Bradyrhizobium diazoefficiens (strain JCM 10833 / BCRC 13528 / IAM 13628 / NBRC 14792 / USDA 110)).